A 428-amino-acid chain; its full sequence is Autophagy-related protein 14 (428 aa).

Residues 82–143 are a coiled coil; sequence QEAIDRTAEI…RKKQLDKVKD (62 aa).

Belongs to the ATG14 family. Component of the autophagy-specific VPS34 PI3-kinase complex I.

It is found in the preautophagosomal structure membrane. The protein resides in the vacuole membrane. Its function is as follows. Required for cytoplasm to vacuole transport (Cvt) and autophagy as a part of the autophagy-specific VPS34 PI3-kinase complex I. This complex is essential to recruit the ATG8-phosphatidylinositol conjugate and the ATG12-ATG5 conjugate to the pre-autophagosomal structure. ATG14 mediates the specific binding of the VPS34 PI3-kinase complex I to the preautophagosomal structure (PAS). Plays a crucial role in hyphal development, conidiogenesis and pathogenicity. Also required for glycogen mobilization, quantity of lipid bodies, and the turgor pressure of appressoria. The polypeptide is Autophagy-related protein 14 (Pyricularia oryzae (strain 70-15 / ATCC MYA-4617 / FGSC 8958) (Rice blast fungus)).